The primary structure comprises 500 residues: MNIRPEEVSSIIKKEIDNYKKSLEIKTSGTVLEVGDGIARIFGLSNVMSGELLEFPHGVMGMALNLEEDNVGAVILGNASLIKEGDEVRATGKVVSVPAGEDLLGRVINALGDPIDGKGEIHVDKYMPIERKASGIIARQPVSEPLQTGIKSIDGMVPIGRGQRELIIGDRQTGKTAIAIDTIINQKGQDVKCIYVAIGQKRSTVAQIYKKLSDLGCMDYTIIVAATASEAAPLQYMAPYSGVAIGEYFMEKGEHVLIIYDDLSKHAVAYREMSLLLRRPPGREAYPGDVFYLHSRLLERAAKLSDELGGGSITALPIIETQAGDVSAYIPTNVISITDGQIFLESQLFNSGFRPAINAGISVSRVGGAAQIKAMKQVASKVKLELAQYTELLTFAQFGSDLDKATKAQLERGHRIMEILKQPQYHPFAVERQVVSFYIVINGHLDDIEVSKVRRFEKELLDYLKANTNILTEIADKKALDKDLEEKLKESIANFKKSFN.

Residue 169–176 (GDRQTGKT) coordinates ATP.

Belongs to the ATPase alpha/beta chains family. F-type ATPases have 2 components, CF(1) - the catalytic core - and CF(0) - the membrane proton channel. CF(1) has five subunits: alpha(3), beta(3), gamma(1), delta(1), epsilon(1). CF(0) has three main subunits: a(1), b(2) and c(9-12). The alpha and beta chains form an alternating ring which encloses part of the gamma chain. CF(1) is attached to CF(0) by a central stalk formed by the gamma and epsilon chains, while a peripheral stalk is formed by the delta and b chains.

The protein localises to the cell inner membrane. The enzyme catalyses ATP + H2O + 4 H(+)(in) = ADP + phosphate + 5 H(+)(out). In terms of biological role, produces ATP from ADP in the presence of a proton gradient across the membrane. The alpha chain is a regulatory subunit. The polypeptide is ATP synthase subunit alpha (Fusobacterium nucleatum subsp. nucleatum (strain ATCC 25586 / DSM 15643 / BCRC 10681 / CIP 101130 / JCM 8532 / KCTC 2640 / LMG 13131 / VPI 4355)).